The following is a 330-amino-acid chain: Polyprenyl transferase dpfgC (330 aa).

The N-linked (GlcNAc...) asparagine glycan is linked to N34. Helical transmembrane passes span A105 to I125, V146 to L166, V175 to G192, K199 to G219, C237 to Y257, N273 to A293, and N310 to A330.

It belongs to the UbiA prenyltransferase family. It depends on Mg(2+) as a cofactor.

It is found in the membrane. It participates in secondary metabolite biosynthesis; terpenoid biosynthesis. Functionally, polyprenyl transferase; part of the gene cluster that mediates the biosynthesis of diterpenoid pyrones. The first step of the pathway is the synthesis of the alpha-pyrone moiety by the polyketide synthase dpfgA via condensation of one acetyl-CoA starter unit with 3 malonyl-CoA units and 2 methylations. The alpha-pyrone is then combined with geranylgeranyl pyrophosphate (GGPP) formed by the GGPP synthase dpfgD through the action of the prenyltransferase dpfgC to yield a linear alpha-pyrone diterpenoid. Subsequent steps in the diterpenoid pyrone biosynthetic pathway involve the decalin core formation, which is initiated by the epoxidation of the C10-C11 olefin by the FAD-dependent oxidoreductase dpfgE, and is followed by a cyclization cascade catalyzed by the terpene cyclase dpfgB. The short chain dehydrogenase/reductase dpfgG then oxidizes the 8S hydroxy group to a ketone and the short chain dehydrogenase/reductase dpfgH reduces the ketone to the 8R hydroxy group to yield higginsianin B. Higginsianin B is further methylated by the methyltransferase dpfgI to produce the intermediate named FDDP B. The cytochrome P450 monooxygenase dfgpJ then catalyzes a three-step oxidation at C-27 to generate a carboxylic acid as well as C-26 hydroxylation. Finally, methyltransferase dpfgK methylates the carboxylic acid generated by dpfgJ, yielding the final diterpenoid pyrones from the pathway which were named FDDP D and FDDP E. In Gibberella zeae (strain ATCC MYA-4620 / CBS 123657 / FGSC 9075 / NRRL 31084 / PH-1) (Wheat head blight fungus), this protein is Polyprenyl transferase dpfgC.